The primary structure comprises 922 residues: Centrosomal protein of 104 kDa (922 aa).

Positions 210 to 277 (EVAQIIRRLD…DLAKEKKQQM (68 aa)) form a coiled coil. Low complexity predominate over residues 307–318 (PLQPLASPSSPQ). Disordered stretches follow at residues 307 to 333 (PLQP…EELA) and 348 to 419 (LASS…PLTE). Residues 396–407 (PEVREADSDVRR) show a composition bias toward basic and acidic residues. 2 HEAT repeats span residues 526–564 (AIPL…LQLI) and 601–637 (GFTV…YRQH). Composition is skewed to basic and acidic residues over residues 673 to 697 (TEAE…EETK) and 714 to 725 (QEKENEAVKLKN). Disordered stretches follow at residues 673–741 (TEAE…TPEI) and 880–922 (PAPQ…HTRR). Residues 678-705 (KTQKRVVTKEAEKQKKEETKALQGLSAA) are a coiled coil.

In terms of assembly, interacts with CCP110 and CEP97. Interacts with ARMC9, TOGARAM1, CCDC66 and CSPP1. As to expression, expressed predominantly in the brain. Also detected, although at much lower levels, in the heart and the liver. Within the brain, expressed in the cerebral cortex, hippocampus, cerebellum and brainstem.

Its subcellular location is the cell projection. It localises to the cilium. It is found in the cytoplasm. The protein localises to the cytoskeleton. The protein resides in the microtubule organizing center. Its subcellular location is the centrosome. It localises to the centriole. It is found in the spindle pole. Functionally, required for ciliogenesis and for structural integrity at the ciliary tip. This Rattus norvegicus (Rat) protein is Centrosomal protein of 104 kDa (Cep104).